Reading from the N-terminus, the 362-residue chain is Large ribosomal subunit protein uL4A (362 aa).

Position 2 is an N-acetylserine (S2). Omega-N-methylarginine is present on R95. A C-terminal-extended nuclear localization signal region spans residues 277–362; it reads PSHIISTSDV…AVFTETLKHD (86 aa).

Belongs to the universal ribosomal protein uL4 family. As to quaternary structure, component of the large ribosomal subunit (LSU). Mature yeast ribosomes consist of a small (40S) and a large (60S) subunit. The 40S small subunit contains 1 molecule of ribosomal RNA (18S rRNA) and 33 different proteins (encoded by 57 genes). The large 60S subunit contains 3 rRNA molecules (25S, 5.8S and 5S rRNA) and 46 different proteins (encoded by 81 genes). uL4 is associated with the polypeptide exit tunnel. uL4 interacts with its chaperone ACL4 and the nuclear import receptor KAP104. Post-translationally, N-terminally acetylated by acetyltransferase NatA.

It is found in the cytoplasm. The protein resides in the nucleus. Its function is as follows. Component of the ribosome, a large ribonucleoprotein complex responsible for the synthesis of proteins in the cell. The small ribosomal subunit (SSU) binds messenger RNAs (mRNAs) and translates the encoded message by selecting cognate aminoacyl-transfer RNA (tRNA) molecules. The large subunit (LSU) contains the ribosomal catalytic site termed the peptidyl transferase center (PTC), which catalyzes the formation of peptide bonds, thereby polymerizing the amino acids delivered by tRNAs into a polypeptide chain. The nascent polypeptides leave the ribosome through a tunnel in the LSU and interact with protein factors that function in enzymatic processing, targeting, and the membrane insertion of nascent chains at the exit of the ribosomal tunnel. uL4 participates in the regulation of the accumulation of its own mRNA. This is Large ribosomal subunit protein uL4A from Saccharomyces cerevisiae (strain ATCC 204508 / S288c) (Baker's yeast).